A 258-amino-acid polypeptide reads, in one-letter code: Cell division protein ZapD (258 aa).

This sequence belongs to the ZapD family. In terms of assembly, interacts with FtsZ.

It is found in the cytoplasm. In terms of biological role, cell division factor that enhances FtsZ-ring assembly. Directly interacts with FtsZ and promotes bundling of FtsZ protofilaments, with a reduction in FtsZ GTPase activity. The protein is Cell division protein ZapD of Coxiella burnetii (strain RSA 331 / Henzerling II).